Reading from the N-terminus, the 513-residue chain is Prostaglandin E2 receptor EP4 subtype (513 aa).

The Extracellular portion of the chain corresponds to M1–S44. N-linked (GlcNAc...) asparagine glycosylation is present at N32. Residues P45–C68 form a helical membrane-spanning segment. Over K69–Y80 the chain is Cytoplasmic. A helical transmembrane segment spans residues T81 to T104. Residues Y105–T121 lie on the Extracellular side of the membrane. A disulfide bridge connects residues C117 and C195. A helical transmembrane segment spans residues F122 to I140. At E141 to L160 the chain is on the cytoplasmic side. A helical membrane pass occupies residues A161–R185. Topologically, residues S186–F209 are extracellular. Residues S210–L236 form a helical membrane-spanning segment. Over R237–E295 the chain is Cytoplasmic. A helical membrane pass occupies residues I296–N323. The Extracellular segment spans residues Q324 to L340. The helical transmembrane segment at Q341–L360 threads the bilayer. The Cytoplasmic segment spans residues R361–I513. Positions G383–G403 are disordered. Over residues R384–G403 the composition is skewed to polar residues. Residues S402, S405, and S407 each carry the phosphoserine modification.

It belongs to the G-protein coupled receptor 1 family. Interacts with FEM1A. In terms of processing, phosphorylation mediates agonist-mediated desensitization by promoting cytoplasmic retention. Abundant expression in ileum, thymus and mastocytoma P-815 cells. Also observed in lung, spleen, heart and uterus.

The protein localises to the cell membrane. Its function is as follows. Receptor for prostaglandin E2 (PGE2). The activity of this receptor is mediated by G(s) proteins that stimulate adenylate cyclase. Has a relaxing effect on smooth muscle. May play an important role in regulating renal hemodynamics, intestinal epithelial transport, adrenal aldosterone secretion, and uterine function. The protein is Prostaglandin E2 receptor EP4 subtype (Ptger4) of Mus musculus (Mouse).